The sequence spans 118 residues: Non-specific lipid-transfer protein 2 (118 aa).

An N-terminal signal peptide occupies residues 1 to 25; it reads MARGMKLACVVLVICMVVIAPMAEG. Disulfide bonds link Cys29-Cys76, Cys39-Cys53, Cys54-Cys99, and Cys74-Cys113.

It belongs to the plant LTP family.

In terms of biological role, plant non-specific lipid-transfer proteins transfer phospholipids as well as galactolipids across membranes. May play a role in wax or cutin deposition in the cell walls of expanding epidermal cells and certain secretory tissues. Binds saturated fatty acids, jasmonic acid and, with highest efficiency, unsaturated fatty acids and lysolipids. The sequence is that of Non-specific lipid-transfer protein 2 from Lens culinaris (Lentil).